A 341-amino-acid chain; its full sequence is MTIRIAINGFGRIGRNVLRALYESGRQTQMRVVAINELAAAEGMAHLLQYDTCHGRFAWSVRQQDDWLWIGDDRIRLLHRPQIADLPWEALQVDVVLECSGVYGSRADGEAHLLAGAGKVLFSHPGGHDLDATVVYGVNQESLLAEHRIVSNASCTTNCIIPVIKLLDDAFAIESGAVTTIHSSMNDQQVIDAYHPDLRRTRAASHSIIPVDTKLAAGIARVLPQFRDRFEAISVRVPTLNVTAIDLSVSVRTPVRVEQVNHLLQKAASTAFHGIVDYTELPLVSTDFNHDPHSAIVDGTQTRVSGRHLIKTLVWCDNEWGFANRMLDTTLAMARAVSNAS.

Position 12–13 (12–13 (RI)) interacts with NAD(+). Residues 154–156 (SCT), Arg-200, 213–214 (TK), and Arg-236 each bind substrate. The active-site Nucleophile is the Cys-155. Position 318 (Asn-318) interacts with NAD(+).

It belongs to the glyceraldehyde-3-phosphate dehydrogenase family. Epd subfamily. Homotetramer.

It is found in the cytoplasm. The catalysed reaction is D-erythrose 4-phosphate + NAD(+) + H2O = 4-phospho-D-erythronate + NADH + 2 H(+). The protein operates within cofactor biosynthesis; pyridoxine 5'-phosphate biosynthesis; pyridoxine 5'-phosphate from D-erythrose 4-phosphate: step 1/5. Catalyzes the NAD-dependent conversion of D-erythrose 4-phosphate to 4-phosphoerythronate. The sequence is that of D-erythrose-4-phosphate dehydrogenase from Edwardsiella ictaluri (strain 93-146).